The primary structure comprises 362 residues: Phosphoserine aminotransferase (362 aa).

Arg43 is an L-glutamate binding site. Residues 77-78 (AT), Trp103, Thr153, Asp173, and Gln196 each bind pyridoxal 5'-phosphate. Lys197 carries the post-translational modification N6-(pyridoxal phosphate)lysine. 238 to 239 (NT) lines the pyridoxal 5'-phosphate pocket.

Belongs to the class-V pyridoxal-phosphate-dependent aminotransferase family. SerC subfamily. As to quaternary structure, homodimer. Pyridoxal 5'-phosphate serves as cofactor.

The protein localises to the cytoplasm. It carries out the reaction O-phospho-L-serine + 2-oxoglutarate = 3-phosphooxypyruvate + L-glutamate. The enzyme catalyses 4-(phosphooxy)-L-threonine + 2-oxoglutarate = (R)-3-hydroxy-2-oxo-4-phosphooxybutanoate + L-glutamate. It participates in amino-acid biosynthesis; L-serine biosynthesis; L-serine from 3-phospho-D-glycerate: step 2/3. Its pathway is cofactor biosynthesis; pyridoxine 5'-phosphate biosynthesis; pyridoxine 5'-phosphate from D-erythrose 4-phosphate: step 3/5. Functionally, catalyzes the reversible conversion of 3-phosphohydroxypyruvate to phosphoserine and of 3-hydroxy-2-oxo-4-phosphonooxybutanoate to phosphohydroxythreonine. The chain is Phosphoserine aminotransferase from Acidithiobacillus ferrooxidans (strain ATCC 23270 / DSM 14882 / CIP 104768 / NCIMB 8455) (Ferrobacillus ferrooxidans (strain ATCC 23270)).